Consider the following 458-residue polypeptide: ATP synthase subunit beta (458 aa).

148 to 155 serves as a coordination point for ATP; sequence GGAGVGKT.

The protein belongs to the ATPase alpha/beta chains family. As to quaternary structure, F-type ATPases have 2 components, CF(1) - the catalytic core - and CF(0) - the membrane proton channel. CF(1) has five subunits: alpha(3), beta(3), gamma(1), delta(1), epsilon(1). CF(0) has three main subunits: a(1), b(2) and c(9-12). The alpha and beta chains form an alternating ring which encloses part of the gamma chain. CF(1) is attached to CF(0) by a central stalk formed by the gamma and epsilon chains, while a peripheral stalk is formed by the delta and b chains.

The protein localises to the cell inner membrane. The enzyme catalyses ATP + H2O + 4 H(+)(in) = ADP + phosphate + 5 H(+)(out). In terms of biological role, produces ATP from ADP in the presence of a proton gradient across the membrane. The catalytic sites are hosted primarily by the beta subunits. This Stutzerimonas stutzeri (strain A1501) (Pseudomonas stutzeri) protein is ATP synthase subunit beta.